Reading from the N-terminus, the 58-residue chain is uncharacterized protein (58 aa).

It is found in the plastid. The protein localises to the chloroplast. This is an uncharacterized protein from Porphyra purpurea (Red seaweed).